Reading from the N-terminus, the 207-residue chain is Ras-related protein RABH1d (207 aa).

16 to 23 (GDQSVGKT) contributes to the GTP binding site. An Effector region motif is present at residues 38 to 46 (YQATIGIDF). GTP-binding positions include 64–68 (DTAGQ), 122–125 (NKTD), and 152–153 (SA). 2 S-geranylgeranyl cysteine lipidation sites follow: C205 and C207. Residue C207 is modified to Cysteine methyl ester.

This sequence belongs to the small GTPase superfamily. Rab family.

The protein localises to the golgi apparatus membrane. Protein transport. Regulator of membrane traffic from the Golgi apparatus towards the endoplasmic reticulum (ER). This is Ras-related protein RABH1d (RABH1D) from Arabidopsis thaliana (Mouse-ear cress).